The chain runs to 465 residues: Phenylalanine--tRNA ligase alpha subunit (465 aa).

Positions 311 and 389 each coordinate L-phenylalanine. A Mg(2+)-binding site is contributed by E391.

The protein belongs to the class-II aminoacyl-tRNA synthetase family. Phe-tRNA synthetase alpha subunit type 2 subfamily. As to quaternary structure, tetramer of two alpha and two beta subunits. It depends on Mg(2+) as a cofactor.

The protein localises to the cytoplasm. It catalyses the reaction tRNA(Phe) + L-phenylalanine + ATP = L-phenylalanyl-tRNA(Phe) + AMP + diphosphate + H(+). This Metallosphaera sedula (strain ATCC 51363 / DSM 5348 / JCM 9185 / NBRC 15509 / TH2) protein is Phenylalanine--tRNA ligase alpha subunit.